Consider the following 29-residue polypeptide: uncharacterized protein (29 aa).

The segment at M1–G29 is disordered.

This is an uncharacterized protein from Saccharomyces cerevisiae (strain ATCC 204508 / S288c) (Baker's yeast).